The chain runs to 438 residues: Lipoyl synthase, mitochondrial (438 aa).

A mitochondrion-targeting transit peptide spans 1–31; sequence MAASARGLRTLQSAHSSTTVPRLQLAVSRCY. Residues 34–57 are compositionally biased toward low complexity; sequence TTSPDPPITNSSNSSNSSNSTPTP. The segment at 34–58 is disordered; that stretch reads TTSPDPPITNSSNSSNSSNSTPTPK. 7 residues coordinate [4Fe-4S] cluster: C148, C153, C159, C179, C183, C186, and S394. A Radical SAM core domain is found at 162 to 383; it reads GSSKSAATAT…KERALEMGFL (222 aa).

The protein belongs to the radical SAM superfamily. Lipoyl synthase family. The cofactor is [4Fe-4S] cluster.

Its subcellular location is the mitochondrion. The enzyme catalyses [[Fe-S] cluster scaffold protein carrying a second [4Fe-4S](2+) cluster] + N(6)-octanoyl-L-lysyl-[protein] + 2 oxidized [2Fe-2S]-[ferredoxin] + 2 S-adenosyl-L-methionine + 4 H(+) = [[Fe-S] cluster scaffold protein] + N(6)-[(R)-dihydrolipoyl]-L-lysyl-[protein] + 4 Fe(3+) + 2 hydrogen sulfide + 2 5'-deoxyadenosine + 2 L-methionine + 2 reduced [2Fe-2S]-[ferredoxin]. The protein operates within protein modification; protein lipoylation via endogenous pathway; protein N(6)-(lipoyl)lysine from octanoyl-[acyl-carrier-protein]: step 2/2. In terms of biological role, catalyzes the radical-mediated insertion of two sulfur atoms into the C-6 and C-8 positions of the octanoyl moiety bound to the lipoyl domains of lipoate-dependent enzymes, thereby converting the octanoylated domains into lipoylated derivatives. The polypeptide is Lipoyl synthase, mitochondrial (Paracoccidioides brasiliensis (strain Pb18)).